The following is a 463-amino-acid chain: SPARC-related modular calcium-binding protein 1 (463 aa).

The N-terminal stretch at 1–25 is a signal peptide; the sequence is MLPARVRLLTPHLLLVLVQLSPAGG. A Kazal-like domain is found at 36-88; that stretch reads SDRDPPCNPHCPRTQPKPICASDGRSYESMCEYQRAKCRDPALAVVHRGRCKD. 6 disulfide bridges follow: cysteine 42/cysteine 73, cysteine 46/cysteine 66, cysteine 55/cysteine 86, cysteine 94/cysteine 117, cysteine 128/cysteine 135, and cysteine 137/cysteine 157. Positions 91-157 constitute a Thyroglobulin type-1 1 domain; it reads QSKCRLERAQ…SSVQNKTPVC (67 aa). The N-linked (GlcNAc...) asparagine glycan is linked to asparagine 224. Residues 234–302 form the Thyroglobulin type-1 2 domain; it reads VHSCDQERQS…TSTRYVMPSC (69 aa). Disulfide bonds link cysteine 237–cysteine 261, cysteine 272–cysteine 279, and cysteine 281–cysteine 302. EF-hand domains follow at residues 369-404 and 406-441; these read LEER…VKKK and KPKK…SKEG. Ca(2+) is bound by residues aspartate 382, asparagine 384, serine 386, aspartate 388, glutamate 393, aspartate 419, asparagine 421, aspartate 423, and glutamate 430. The N-linked (GlcNAc...) asparagine glycan is linked to asparagine 384.

Post-translationally, glycosylated. As to expression, widely expressed in many tissues with a strongest signal in ovary.

It localises to the secreted. The protein localises to the extracellular space. The protein resides in the extracellular matrix. Its subcellular location is the basement membrane. Functionally, probable regulator of osteoblast differentiation. Plays essential roles in both eye and limb development. The chain is SPARC-related modular calcium-binding protein 1 (Smoc1) from Mus musculus (Mouse).